Consider the following 383-residue polypeptide: Presenilin-associated rhomboid-like protein A, mitochondrial (383 aa).

A mitochondrion-targeting transit peptide spans 1-37 (MAWRSCFMKWTQINSINASSLCPKSTRLNIHPQQRCG). The tract at residues 35–75 (RCGFRKTERPSESKKGVQETEAEAGGHNRAVPPKPVPPLPP) is disordered. The Mitochondrial matrix portion of the chain corresponds to 38-83 (FRKTERPSESKKGVQETEAEAGGHNRAVPPKPVPPLPPRRPHQLFR). The span at 39–52 (RKTERPSESKKGVQ) shows a compositional bias: basic and acidic residues. Over residues 66–75 (PPKPVPPLPP) the composition is skewed to pro residues. The chain crosses the membrane as a helical span at residues 84-104 (PLVFTVGFTGCSFGAAAILQY). The Mitochondrial intermembrane segment spans residues 105 to 168 (ESVKSRVQLA…FWSGLSEGQK (64 aa)). Residues 169-189 (TVTGIIALNTVVLCCWRVPAM) traverse the membrane as a helical segment. Residues 190-219 (QRFLVKYFTSNPASKTRCLPMVLSSFSHYS) are Mitochondrial matrix-facing. A helical transmembrane segment spans residues 220–240 (VIHMVVNMYVLWTFSSSIVSL). Over 241–245 (LGREQ) the chain is Mitochondrial intermembrane. A helical transmembrane segment spans residues 246–266 (FLALYLSGGVISTFVSYVFKT). Over 267–271 (ATGRL) the chain is Mitochondrial matrix. Residues 272-292 (GPSLGASGSIMTVLAAVCTKI) form a helical membrane-spanning segment. Residue Ser-278 is the Nucleophile of the active site. Topologically, residues 293–298 (PEAKLG) are mitochondrial intermembrane. Residues 299 to 319 (IVLLPVISFSAGNALKALVAL) traverse the membrane as a helical segment. The Mitochondrial matrix segment spans residues 320–334 (DIAGLVLGWRFFDHA). A helical transmembrane segment spans residues 335–355 (AHLGGALFGVWYIGYGHELIW). Residue His-336 is part of the active site. Residues 356-383 (RKREPLIKFWHELRNMSPGRPGPGGGGG) lie on the Mitochondrial intermembrane side of the membrane.

Belongs to the peptidase S54 family.

The protein resides in the mitochondrion inner membrane. The enzyme catalyses Cleaves type-1 transmembrane domains using a catalytic dyad composed of serine and histidine that are contributed by different transmembrane domains.. Required for the control of apoptosis during postnatal growth. Essential for proteolytic processing of an antiapoptotic form of opa1 which prevents the release of mitochondrial cytochrome c in response to intrinsic apoptotic signals. This Danio rerio (Zebrafish) protein is Presenilin-associated rhomboid-like protein A, mitochondrial (parla).